Consider the following 896-residue polypeptide: Protein translocase subunit SecA (896 aa).

ATP contacts are provided by residues glutamine 87, 105 to 109 (GEGKT), and aspartate 512. The disordered stretch occupies residues 858-886 (RAGGEAEAAKPVVRDEKKVGRNDPCPCGS). Residues 869 to 878 (VVRDEKKVGR) are compositionally biased toward basic and acidic residues. Residues cysteine 882, cysteine 884, cysteine 893, and cysteine 894 each contribute to the Zn(2+) site.

It belongs to the SecA family. Monomer and homodimer. Part of the essential Sec protein translocation apparatus which comprises SecA, SecYEG and auxiliary proteins SecDF-YajC and YidC. Zn(2+) is required as a cofactor.

Its subcellular location is the cell inner membrane. It localises to the cytoplasm. It catalyses the reaction ATP + H2O + cellular proteinSide 1 = ADP + phosphate + cellular proteinSide 2.. Its function is as follows. Part of the Sec protein translocase complex. Interacts with the SecYEG preprotein conducting channel. Has a central role in coupling the hydrolysis of ATP to the transfer of proteins into and across the cell membrane, serving as an ATP-driven molecular motor driving the stepwise translocation of polypeptide chains across the membrane. In Syntrophotalea carbinolica (strain DSM 2380 / NBRC 103641 / GraBd1) (Pelobacter carbinolicus), this protein is Protein translocase subunit SecA.